Consider the following 168-residue polypeptide: Large ribosomal subunit protein uL11 (168 aa).

It belongs to the universal ribosomal protein uL11 family. As to quaternary structure, part of the ribosomal stalk of the 50S ribosomal subunit. Interacts with L10 and the large rRNA to form the base of the stalk. L10 forms an elongated spine to which L12 dimers bind in a sequential fashion forming a multimeric L10(L12)X complex.

Functionally, forms part of the ribosomal stalk which helps the ribosome interact with GTP-bound translation factors. This is Large ribosomal subunit protein uL11 from Metallosphaera sedula (strain ATCC 51363 / DSM 5348 / JCM 9185 / NBRC 15509 / TH2).